The primary structure comprises 585 residues: Arginine--tRNA ligase (585 aa).

A 'HIGH' region motif is present at residues 131 to 141 (ANPTGPMHVGH).

This sequence belongs to the class-I aminoacyl-tRNA synthetase family. As to quaternary structure, monomer.

The protein localises to the cytoplasm. It carries out the reaction tRNA(Arg) + L-arginine + ATP = L-arginyl-tRNA(Arg) + AMP + diphosphate. The sequence is that of Arginine--tRNA ligase from Bartonella bacilliformis (strain ATCC 35685 / KC583 / Herrer 020/F12,63).